Here is a 25-residue protein sequence, read N- to C-terminus: Xenoposin precursor fragment R2 (25 aa).

As to expression, expressed by the skin glands.

The protein localises to the secreted. Antimicrobial peptide. The polypeptide is Xenoposin precursor fragment R2 (Xenopus ruwenzoriensis (Uganda clawed frog)).